A 250-amino-acid polypeptide reads, in one-letter code: Probable transcriptional regulatory protein SCO1521 (250 aa).

This sequence belongs to the TACO1 family.

The protein resides in the cytoplasm. In Streptomyces coelicolor (strain ATCC BAA-471 / A3(2) / M145), this protein is Probable transcriptional regulatory protein SCO1521.